Here is a 130-residue protein sequence, read N- to C-terminus: Osteocrin (130 aa).

The N-terminal stretch at 1–25 (MLDWRLASTHFILAMIVMLWGSGKA) is a signal peptide. At Arg-129 the chain carries Arginine amide.

It belongs to the Osteocrin family. Interacts with NPR3. In terms of tissue distribution, expressed in skeletal muscle and to a much lesser extent in bone, brown adipose tissue, spleen and testis. Not expressed in neurons.

It is found in the secreted. Its function is as follows. Hormone that acts as a ligand for natriuretic peptide receptor NPR3/NPR-C and promotes bone growth and physical endurance in muscle. Acts as a regulator of osteoblast differentiation and bone growth by binding to natriuretic peptide receptor NPR3/NPR-C, thereby preventing binding between NPR3/NPR-C and natriuretic peptides, leading to increase cGMP production. Required to enhance physical endurance: induced following physical exercise in muscle and promotes cGMP production, probably by interacting with NPR3/NPR-C. May act as an autocrine and paracrine factor linked to glucose metabolism in skeletal muscle. In Mus musculus (Mouse), this protein is Osteocrin.